Reading from the N-terminus, the 261-residue chain is Ribosomal RNA small subunit methyltransferase J (261 aa).

Residues 111-112 (RD), 127-128 (ER), 163-164 (SS), and aspartate 181 contribute to the S-adenosyl-L-methionine site.

The protein belongs to the methyltransferase superfamily. RsmJ family.

It localises to the cytoplasm. The catalysed reaction is guanosine(1516) in 16S rRNA + S-adenosyl-L-methionine = N(2)-methylguanosine(1516) in 16S rRNA + S-adenosyl-L-homocysteine + H(+). Specifically methylates the guanosine in position 1516 of 16S rRNA. In Shewanella sp. (strain MR-4), this protein is Ribosomal RNA small subunit methyltransferase J.